The chain runs to 200 residues: Large ribosomal subunit protein bL25 (200 aa).

Disordered regions lie at residues 1 to 20 (MTIE…ASRR) and 179 to 200 (PVVA…GEAA).

The protein belongs to the bacterial ribosomal protein bL25 family. CTC subfamily. Part of the 50S ribosomal subunit; part of the 5S rRNA/L5/L18/L25 subcomplex. Contacts the 5S rRNA. Binds to the 5S rRNA independently of L5 and L18.

In terms of biological role, this is one of the proteins that binds to the 5S RNA in the ribosome where it forms part of the central protuberance. The chain is Large ribosomal subunit protein bL25 from Azoarcus sp. (strain BH72).